Reading from the N-terminus, the 187-residue chain is Adenine phosphoribosyltransferase (187 aa).

A133–S137 provides a ligand contact to AMP.

It belongs to the purine/pyrimidine phosphoribosyltransferase family. In terms of assembly, homodimer. Requires Mg(2+) as cofactor.

It localises to the cytoplasm. The protein localises to the nucleus. It carries out the reaction AMP + diphosphate = 5-phospho-alpha-D-ribose 1-diphosphate + adenine. Its pathway is purine metabolism; AMP biosynthesis via salvage pathway; AMP from adenine: step 1/1. Catalyzes a salvage reaction resulting in the formation of AMP, that is energically less costly than de novo synthesis. This Kluyveromyces lactis (strain ATCC 8585 / CBS 2359 / DSM 70799 / NBRC 1267 / NRRL Y-1140 / WM37) (Yeast) protein is Adenine phosphoribosyltransferase (APT1).